We begin with the raw amino-acid sequence, 117 residues long: Movement protein TGB2 (117 aa).

The Cytoplasmic segment spans residues 1 to 11 (MPLIPPPNPQK). Residues 12–32 (TYQIAVLALGLVLLLAFVLIS) traverse the membrane as a helical segment. Topologically, residues 33 to 78 (DHSPKVGDHLHNLPFGGEYKDGTKTIKYFQRPNQHSLSKTLAKSHN) are lumenal. A helical transmembrane segment spans residues 79–99 (TTIFLIILGLIGTLHGLHYFS). At 100-117 (NNRRISSSLHCVLCQNKH) the chain is on the cytoplasmic side.

Belongs to the Tymovirales TGBp2 protein family.

It is found in the host endoplasmic reticulum membrane. Its function is as follows. Plays a role in viral cell-to-cell propagation, by facilitating genome transport to neighboring plant cells through plasmosdesmata,. In Trifolium (WCMV), this protein is Movement protein TGB2.